A 2146-amino-acid polypeptide reads, in one-letter code: Phospholipid-transporting ATPase ABCA7 (2146 aa).

A helical transmembrane segment spans residues 22–42 (PVQLLVELLWPLFLFFILVAV). Topologically, residues 43-549 (RHSHPPLEHH…DVFLRVLSRS (507 aa)) are extracellular. A disulfide bridge links Cys-75 with Cys-225. The N-linked (GlcNAc...) asparagine glycan is linked to Asn-312. Transmembrane regions (helical) follow at residues 550–570 (LPLFLTLAWIYSVTLTVKAVV), 593–613 (LGWFLSCLGPFLLSAALLVLV), 626–646 (GVVFLFLAAFAVATVTQSFLL), 655–675 (LAAACGGLAYFSLYLPYVLCV), 687–707 (VAASLLSPVAFGFGCESLALL), and 727–747 (VFSLAQVSGLLLLDAALYGLA). One can recognise an ABC transporter 1 domain in the interval 807 to 1038 (VSVRSLEKRF…LGSGYYLTLV (232 aa)). Residue 841 to 848 (GHNGAGKT) coordinates ATP. A helical membrane pass occupies residues 849–869 (TTLSILSGLFPPSGGSAFILG). A compositionally biased stretch (basic and acidic residues) spans 1048 to 1066 (EKADTDMEGSVDTRQEKKN). Disordered regions lie at residues 1048-1072 (EKADTDMEGSVDTRQEKKNGSQGSR) and 1185-1209 (TALENGEPAGSAPETDQGSGPDAVG). A helical transmembrane segment spans residues 1243-1263 (IVLPALFVGLALVFSLIVPPF). The Extracellular portion of the chain corresponds to 1264 to 1537 (GHYPALRLSP…ALMASSVDVL (274 aa)). A disulfide bond links Cys-1345 and Cys-1359. The next 6 helical transmembrane spans lie at 1538–1558 (VSICVVFAMSFVPASFTLVLI), 1584–1604 (FLWDMCNYLVPACIVVLIFLA), 1621–1641 (LLLLLYGWSITPLMYPASFFF), 1649–1669 (VVLTCINLFIGINGSMATFVL), 1683–1703 (ILKQVFLIFPHFCLGRGLIDM), and 1729–1749 (VVGKNLLAMVIQGPLFLLFTL). Residues 1793-2025 (LVLRNLTKVY…FAAGHTLTLR (233 aa)) form the ABC transporter 2 domain. An ATP-binding site is contributed by 1827 to 1834 (GVNGAGKT). Residues 2104-2146 (QGKDEDTEEQKEAGVGVDPAPGLQHPKRVSQFLDDPSTAETVL) form a disordered region.

Belongs to the ABC transporter superfamily. ABCA family. N-glycosylated. In terms of tissue distribution, expressed in leukocytes (at protein level). Widely expressed. Highly expressed in myelo-lymphatic tissues including peripheral leukocytes, thymus, spleen and bone marrow. Expressed in the hippocampus and the cerebellum. Isoform 2: Abundant in lymph node, spleen, thymus and trachea. Isoform 1: Strongly expressed in brain and bone marrow.

The protein resides in the cell membrane. Its subcellular location is the golgi apparatus membrane. It is found in the early endosome membrane. It localises to the cytoplasm. The protein localises to the cell projection. The protein resides in the ruffle membrane. Its subcellular location is the phagocytic cup. It is found in the endoplasmic reticulum. The catalysed reaction is ATP + H2O + phospholipidSide 1 = ADP + phosphate + phospholipidSide 2.. It catalyses the reaction a 1,2-diacyl-sn-glycero-3-phosphocholine(out) + ATP + H2O = a 1,2-diacyl-sn-glycero-3-phosphocholine(in) + ADP + phosphate + H(+). The enzyme catalyses a 1,2-diacyl-sn-glycero-3-phospho-L-serine(out) + ATP + H2O = a 1,2-diacyl-sn-glycero-3-phospho-L-serine(in) + ADP + phosphate + H(+). Its activity is regulated as follows. ATPase activity is decreased by cholesterol and ceramide. ATPase activity is stimulated by phosphatidylserine, phosphatidylcholine and sphingomyelin, but phosphatidylserine is more effective. Functionally, catalyzes the translocation of specific phospholipids from the cytoplasmic to the extracellular/lumenal leaflet of membrane coupled to the hydrolysis of ATP. Transports preferentially phosphatidylserine over phosphatidylcholine. Plays a role in lipid homeostasis and macrophage-mediated phagocytosis. Binds APOA1 and may function in apolipoprotein-mediated phospholipid efflux from cells. May also mediate cholesterol efflux. May regulate cellular ceramide homeostasis during keratinocyte differentiation. Involved in lipid raft organization and CD1D localization on thymocytes and antigen-presenting cells, which plays an important role in natural killer T-cell development and activation. Plays a role in phagocytosis of apoptotic cells by macrophages. Macrophage phagocytosis is stimulated by APOA1 or APOA2, probably by stabilization of ABCA7. Also involved in phagocytic clearance of amyloid-beta by microglia cells and macrophages. Further limits amyloid-beta production by playing a role in the regulation of amyloid-beta A4 precursor protein (APP) endocytosis and/or processing. Amyloid-beta is the main component of amyloid plaques found in the brains of Alzheimer patients. The chain is Phospholipid-transporting ATPase ABCA7 from Homo sapiens (Human).